A 576-amino-acid polypeptide reads, in one-letter code: MNIQALLSDKVSQALIAAGAPAGSEPQVRQSAKAQFGDYQANGVMAIAKKLGMQPRQLAEKVIELLDLDGIASKVEIAGPGFINIFLDRQWVASKVEEALKAPKLGVQPVEPQTIVVDYSAPNVAKQMHVGHLRSTIIGDAAVRTLEFLGHNVIRANHVGDWGTQFGMLIAYLEKMQNENASDMGLSDLELFYQQAKKTYDEDEEFAKRARAYVVKLQSGDEYCRQMWRKLVDITMAQNQIAYDRLNVTLTKDDVMGESLYNTMLPEIVADLKAKGLAVESEGATVVYLDEYKNKDGEPMGVIIQKKDGGYLYTTTDIACAKYRYETLGADRVLYYIDSRQHQHLMQAWTIVRKAGYVPESVPLEHHMFGMMLGKDGKPFKTRSGGTVKLSDLLDEAIERAGKLIAEKNPDMPADELKQVVEAVGIGAVKYADLSKSRTTDYIFDWDNMLALDGNTAPYMQYAYTRVVSVFKRAGIDESNLTLPLVITEDREAALATRLLQFEEIITTVAREGTPHVMCSYLYDLAGLFSSFYEHCQILNADSEESRQSRLKLAMLTAKTLKQGLDTLGIQTVERM.

The 'HIGH' region motif lies at 122–132 (PNVAKQMHVGH).

Belongs to the class-I aminoacyl-tRNA synthetase family. As to quaternary structure, monomer.

The protein resides in the cytoplasm. The enzyme catalyses tRNA(Arg) + L-arginine + ATP = L-arginyl-tRNA(Arg) + AMP + diphosphate. The protein is Arginine--tRNA ligase of Yersinia enterocolitica serotype O:8 / biotype 1B (strain NCTC 13174 / 8081).